A 302-amino-acid chain; its full sequence is Cuticle collagen 40 (302 aa).

2 disordered regions span residues 79–103 (RIKR…GGGG) and 119–302 (AGAP…APGY). Gly residues predominate over residues 91–103 (YAEGGAAAGGGGG). 5 triple-helical region regions span residues 114–143 (GAAG…AGSD), 162–185 (GPAG…DGNT), 189–221 (GGEG…PGQV), 226–252 (GTPG…AGAS), and 255–290 (GPAG…GGGC). Low complexity predominate over residues 137–154 (PGTAGSDAEAAAAPTASD). Residues 194–203 (AGPPGPPGPA) show a composition bias toward pro residues. 2 stretches are compositionally biased toward low complexity: residues 205–234 (NPGT…AGAA) and 245–281 (NPGS…PGEA). The segment covering 293 to 302 (CPPPRTAPGY) has biased composition (pro residues).

The protein belongs to the cuticular collagen family. As to quaternary structure, collagen polypeptide chains are complexed within the cuticle by disulfide bonds and other types of covalent cross-links.

Nematode cuticles are composed largely of collagen-like proteins. The cuticle functions both as an exoskeleton and as a barrier to protect the worm from its environment. The protein is Cuticle collagen 40 (col-40) of Caenorhabditis elegans.